Consider the following 239-residue polypeptide: Putative ankyrin repeat protein RBE_0489 (239 aa).

ANK repeat units follow at residues 23–52, 80–109, and 113–143; these read ISSR…SPNA, GIDT…FINA, and FGFT…SLTL.

This is Putative ankyrin repeat protein RBE_0489 from Rickettsia bellii (strain RML369-C).